The primary structure comprises 345 residues: Methionine import ATP-binding protein MetN (345 aa).

Residues 2–241 enclose the ABC transporter domain; sequence IKLKNISKIF…PKTELAQEFI (240 aa). ATP is bound at residue 38-45; that stretch reads GASGAGKS.

It belongs to the ABC transporter superfamily. Methionine importer (TC 3.A.1.24) family. As to quaternary structure, the complex is composed of two ATP-binding proteins (MetN), two transmembrane proteins (MetI) and a solute-binding protein (MetQ).

It localises to the cell inner membrane. The enzyme catalyses L-methionine(out) + ATP + H2O = L-methionine(in) + ADP + phosphate + H(+). The catalysed reaction is D-methionine(out) + ATP + H2O = D-methionine(in) + ADP + phosphate + H(+). Its function is as follows. Part of the ABC transporter complex MetNIQ involved in methionine import. Responsible for energy coupling to the transport system. The chain is Methionine import ATP-binding protein MetN from Mannheimia succiniciproducens (strain KCTC 0769BP / MBEL55E).